Consider the following 358-residue polypeptide: Peroxidase 12 (358 aa).

The first 31 residues, 1 to 31, serve as a signal peptide directing secretion; the sequence is MTKAYSTRVLTFLILISLMAVTLNLFPTVEA. 4 disulfides stabilise this stretch: Cys53–Cys134, Cys86–Cys91, Cys140–Cys335, and Cys220–Cys247. His84 (proton acceptor) is an active-site residue. Positions 85, 88, 90, 92, and 94 each coordinate Ca(2+). Pro183 is a substrate binding site. Asn188 and Asn202 each carry an N-linked (GlcNAc...) asparagine glycan. His213 serves as a coordination point for heme b. Thr214 contributes to the Ca(2+) binding site. N-linked (GlcNAc...) asparagine glycosylation occurs at Asn251. The Ca(2+) site is built by Asp259, Ser262, and Asp267. A glycan (N-linked (GlcNAc...) asparagine) is linked at Asn334.

Belongs to the peroxidase family. Classical plant (class III) peroxidase subfamily. Requires heme b as cofactor. It depends on Ca(2+) as a cofactor. As to expression, expressed in roots and leaves.

The protein resides in the secreted. It localises to the vacuole. The enzyme catalyses 2 a phenolic donor + H2O2 = 2 a phenolic radical donor + 2 H2O. Its function is as follows. Removal of H(2)O(2), oxidation of toxic reductants, biosynthesis and degradation of lignin, suberization, auxin catabolism, response to environmental stresses such as wounding, pathogen attack and oxidative stress. These functions might be dependent on each isozyme/isoform in each plant tissue. Functionally, exhibits a Ca(2+)-pectate binding affinity which could be interpreted in vivo as a specificity to interact with the pectic structure of the cell wall. This chain is Peroxidase 12 (PER12), found in Arabidopsis thaliana (Mouse-ear cress).